A 59-amino-acid chain; its full sequence is Large ribosomal subunit protein uL30 (59 aa).

The protein belongs to the universal ribosomal protein uL30 family. As to quaternary structure, part of the 50S ribosomal subunit.

This chain is Large ribosomal subunit protein uL30, found in Streptococcus agalactiae serotype Ia (strain ATCC 27591 / A909 / CDC SS700).